We begin with the raw amino-acid sequence, 232 residues long: Aquaporin Z (232 aa).

2 helical membrane passes run 8-28 (AFGT…AAGF) and 33-53 (IGLL…AFAI). Positions 62 to 64 (NPA) match the NPA 1 motif. The next 3 helical transmembrane spans lie at 84-104 (IIAQ…IATG), 130-150 (MLAA…VIMG), and 159-179 (GFAP…SIPV). The NPA 2 motif lies at 185–187 (NPA). A helical membrane pass occupies residues 201 to 221 (VSQLWLFWVAPIVGGVLGAVI).

The protein belongs to the MIP/aquaporin (TC 1.A.8) family. In terms of assembly, homotetramer.

It localises to the cell inner membrane. The enzyme catalyses H2O(in) = H2O(out). In terms of biological role, channel that permits osmotically driven movement of water in both directions. It is involved in the osmoregulation and in the maintenance of cell turgor during volume expansion in rapidly growing cells. It mediates rapid entry or exit of water in response to abrupt changes in osmolarity. The chain is Aquaporin Z from Vibrio parahaemolyticus serotype O3:K6 (strain RIMD 2210633).